The sequence spans 76 residues: U7-lycotoxin-Ls1b (76 aa).

The N-terminal stretch at 1–22 (MKLISFTGLALLLIVSLIDVEA) is a signal peptide. The propeptide occupies 23-26 (QNEG).

Belongs to the neurotoxin 19 (CSTX) family. 07 (U7-Lctx) subfamily. In terms of processing, contains 4 disulfide bonds. As to expression, expressed by the venom gland.

It is found in the secreted. The chain is U7-lycotoxin-Ls1b from Lycosa singoriensis (Wolf spider).